The following is a 229-amino-acid chain: Small ribosomal subunit protein uS3 (229 aa).

Residues 39–107 (VRQFLIKELK…PAQINISEVR (69 aa)) form the KH type-2 domain.

The protein belongs to the universal ribosomal protein uS3 family. As to quaternary structure, part of the 30S ribosomal subunit. Forms a tight complex with proteins S10 and S14.

Its function is as follows. Binds the lower part of the 30S subunit head. Binds mRNA in the 70S ribosome, positioning it for translation. The sequence is that of Small ribosomal subunit protein uS3 from Photobacterium profundum (strain SS9).